Reading from the N-terminus, the 466-residue chain is UDP-N-acetylmuramate--L-alanine ligase (466 aa).

ATP is bound at residue 114 to 120 (GTHGKTT).

The protein belongs to the MurCDEF family.

It is found in the cytoplasm. The enzyme catalyses UDP-N-acetyl-alpha-D-muramate + L-alanine + ATP = UDP-N-acetyl-alpha-D-muramoyl-L-alanine + ADP + phosphate + H(+). Its pathway is cell wall biogenesis; peptidoglycan biosynthesis. Its function is as follows. Cell wall formation. The polypeptide is UDP-N-acetylmuramate--L-alanine ligase (Mesorhizobium japonicum (strain LMG 29417 / CECT 9101 / MAFF 303099) (Mesorhizobium loti (strain MAFF 303099))).